We begin with the raw amino-acid sequence, 600 residues long: Alpha pinene synthase, chloroplastic (600 aa).

The interval 1–27 is disordered; that stretch reads MSSISMHAGPLNISAANNHHPSWDRRV. The transit peptide at 1-31 directs the protein to the chloroplast; that stretch reads MSSISMHAGPLNISAANNHHPSWDRRVSKPR. Residues D354, D358, D498, and E506 each contribute to the Mg(2+) site. A DDXXD motif motif is present at residues 354 to 358; it reads DDVYD.

It belongs to the terpene synthase family. Tpsa subfamily. Requires Mg(2+) as cofactor. The cofactor is Mn(2+). Expressed at low levels in leaves.

The protein resides in the plastid. Its subcellular location is the chloroplast. It carries out the reaction (2E)-geranyl diphosphate = alpha-pinene + diphosphate. It participates in secondary metabolite biosynthesis; terpenoid biosynthesis. Its function is as follows. Monoterpene synthase involved in the biosynthesis of volatile compounds widely used in aromatherapy and folk medicine, and present in culinary herbs. Mediates the conversion of (2E)-geranyl diphosphate (GPP) into alpha-pinene and, as minor compounds, into alpha-phellandrene, limonene and alpha-terpinolene. This Lavandula viridis (Green lavender) protein is Alpha pinene synthase, chloroplastic.